We begin with the raw amino-acid sequence, 71 residues long: Small ribosomal subunit protein bS18 (71 aa).

Belongs to the bacterial ribosomal protein bS18 family. As to quaternary structure, part of the 30S ribosomal subunit. Forms a tight heterodimer with protein bS6.

In terms of biological role, binds as a heterodimer with protein bS6 to the central domain of the 16S rRNA, where it helps stabilize the platform of the 30S subunit. The polypeptide is Small ribosomal subunit protein bS18 (Thermosynechococcus vestitus (strain NIES-2133 / IAM M-273 / BP-1)).